Here is a 298-residue protein sequence, read N- to C-terminus: Ectoine dioxygenase (298 aa).

The span at 1-18 shows a compositional bias: basic and acidic residues; the sequence is MLQQAIDRDPVDRIDRYP. The segment at 1–26 is disordered; it reads MLQQAIDRDPVDRIDRYPTRTAEPAP. Q133 lines the L-ectoine pocket. Residues H150, D152, and H251 each coordinate Fe cation.

This sequence belongs to the PhyH family. EctD subfamily. In terms of assembly, homodimer. Fe(2+) is required as a cofactor.

The enzyme catalyses L-ectoine + 2-oxoglutarate + O2 = 5-hydroxyectoine + succinate + CO2. Its function is as follows. Involved in the biosynthesis of 5-hydroxyectoine, called compatible solute, which helps organisms to survive extreme osmotic stress by acting as a highly soluble organic osmolyte. Catalyzes the 2-oxoglutarate-dependent selective hydroxylation of L-ectoine to yield (4S,5S)-5-hydroxyectoine. This chain is Ectoine dioxygenase, found in Nocardia farcinica (strain IFM 10152).